The following is a 784-amino-acid chain: Homeobox-leucine zipper protein ROC2 (784 aa).

Residues 60–113 (AESGDNMIRSRASDPLGGDEFESKSGSENVDGVSVDDQDPNQRPRKKRYHRHTQ) form a disordered region. The segment covering 102 to 113 (RPRKKRYHRHTQ) has biased composition (basic residues). The segment at residues 104-163 (RKKRYHRHTQHQIQEMEAFFKECPHPDDKQRKELSRELGLEPLQVKFWFQNKRTQMKNQH) is a DNA-binding region (homeobox). The stretch at 158-234 (QMKNQHERHE…DRISAIAAKY (77 aa)) forms a coiled coil. Residues 286 to 523 (SEVDKPMIVE…LDRQCERLAS (238 aa)) enclose the START domain.

Belongs to the HD-ZIP homeobox family. Class IV subfamily.

Its subcellular location is the nucleus. Functionally, probable transcription factor. The sequence is that of Homeobox-leucine zipper protein ROC2 (ROC2) from Oryza sativa subsp. japonica (Rice).